A 545-amino-acid chain; its full sequence is Phenylalanine--tRNA ligase beta subunit (545 aa).

Positions 270-346 (LEPKERLLTT…KGYGYENIKV (77 aa)) constitute a B5 domain. Mg(2+) is bound by residues Asp-324, Asp-330, Glu-333, and Asp-334.

It belongs to the phenylalanyl-tRNA synthetase beta subunit family. Type 2 subfamily. In terms of assembly, tetramer of two alpha and two beta subunits. It depends on Mg(2+) as a cofactor.

The protein localises to the cytoplasm. It carries out the reaction tRNA(Phe) + L-phenylalanine + ATP = L-phenylalanyl-tRNA(Phe) + AMP + diphosphate + H(+). This is Phenylalanine--tRNA ligase beta subunit from Methanosarcina acetivorans (strain ATCC 35395 / DSM 2834 / JCM 12185 / C2A).